The sequence spans 530 residues: Probable basic-leucine zipper transcription factor L (530 aa).

2 stretches are compositionally biased toward low complexity: residues M1 to S17 and S24 to S39. Residues M1–K76 form a disordered region. Residues V55–L118 enclose the bZIP domain. Positions K56–K77 are basic motif. Positions L83–I104 are leucine-zipper. Disordered stretches follow at residues N142–V177, S216–P258, and H389–N481. 2 stretches are compositionally biased toward low complexity: residues R149–P176 and N220–N247. Positions L248–T257 are enriched in polar residues. The segment covering S436–S478 has biased composition (low complexity).

It belongs to the bZIP family.

It is found in the nucleus. In terms of biological role, probable transcriptional regulator. This is Probable basic-leucine zipper transcription factor L (bzpL) from Dictyostelium discoideum (Social amoeba).